We begin with the raw amino-acid sequence, 591 residues long: Aspartate--tRNA ligase (591 aa).

Residue glutamate 171 participates in L-aspartate binding. Residues 195–198 form an aspartate region; it reads QLFK. L-aspartate is bound at residue arginine 217. ATP-binding positions include 217-219 and glutamine 226; that span reads RDE. Histidine 448 serves as a coordination point for L-aspartate. Glutamate 482 contributes to the ATP binding site. Arginine 489 provides a ligand contact to L-aspartate. Residue 534–537 participates in ATP binding; that stretch reads GLDR.

It belongs to the class-II aminoacyl-tRNA synthetase family. Type 1 subfamily. As to quaternary structure, homodimer.

It localises to the cytoplasm. The catalysed reaction is tRNA(Asp) + L-aspartate + ATP = L-aspartyl-tRNA(Asp) + AMP + diphosphate. Functionally, catalyzes the attachment of L-aspartate to tRNA(Asp) in a two-step reaction: L-aspartate is first activated by ATP to form Asp-AMP and then transferred to the acceptor end of tRNA(Asp). This Aliivibrio salmonicida (strain LFI1238) (Vibrio salmonicida (strain LFI1238)) protein is Aspartate--tRNA ligase.